The primary structure comprises 524 residues: Phosphoenolpyruvate carboxykinase (ATP) (524 aa).

The substrate site is built by arginine 52, tyrosine 188, and lysine 194. Residues lysine 194, histidine 213, and 229 to 237 (GLSGTGKTT) each bind ATP. Mn(2+)-binding residues include lysine 194 and histidine 213. Mn(2+) is bound at residue aspartate 250. The ATP site is built by glutamate 278, arginine 314, and threonine 439. Arginine 314 provides a ligand contact to substrate.

This sequence belongs to the phosphoenolpyruvate carboxykinase (ATP) family. Requires Mn(2+) as cofactor.

The protein resides in the cytoplasm. The enzyme catalyses oxaloacetate + ATP = phosphoenolpyruvate + ADP + CO2. Its pathway is carbohydrate biosynthesis; gluconeogenesis. Functionally, involved in the gluconeogenesis. Catalyzes the conversion of oxaloacetate (OAA) to phosphoenolpyruvate (PEP) through direct phosphoryl transfer between the nucleoside triphosphate and OAA. In Campylobacter jejuni (strain RM1221), this protein is Phosphoenolpyruvate carboxykinase (ATP).